Here is a 223-residue protein sequence, read N- to C-terminus: DNA-directed RNA polymerase III subunit RPC7 (223 aa).

Positions 110-223 (MMPRNKCKKA…SDDNMDEATY (114 aa)) are disordered. A compositionally biased stretch (basic residues) spans 114–125 (NKCKKAGPKPKK). Thr133 bears the Phosphothreonine mark. The segment covering 140–155 (DVLKKMEELEKRGDGE) has biased composition (basic and acidic residues). Ser157 carries the post-translational modification Phosphoserine. Basic and acidic residues predominate over residues 164 to 173 (KEGSKEKSKE). 2 stretches are compositionally biased toward acidic residues: residues 174 to 198 (GDDD…EEND) and 205 to 223 (EDGD…EATY).

This sequence belongs to the eukaryotic RPC7 RNA polymerase subunit family. In terms of assembly, component of the RNA polymerase III complex consisting of 17 subunits: a ten-subunit horseshoe-shaped catalytic core composed of POLR3A/RPC1, POLR3B/RPC2, POLR1C/RPAC1, POLR1D/RPAC2, POLR3K/RPC10, POLR2E/RPABC1, POLR2F/RPABC2, POLR2H/RPABC3, POLR2K/RPABC4 and POLR2L/RPABC5; a mobile stalk composed of two subunits POLR3H/RPC8 and CRCP/RPC9, protruding from the core and functioning primarily in transcription initiation; and additional subunits homologous to general transcription factors of the RNA polymerase II machinery, POLR3C/RPC3-POLR3F/RPC6-POLR3G/RPC7 heterotrimer required for transcription initiation and POLR3D/RPC4-POLR3E/RPC5 heterodimer involved in both transcription initiation and termination. Directly interacts with POLR3C/RPC62. Also found in a trimeric complex with POLR3C/RPC3 and POLR3GL. In terms of tissue distribution, barely detectable in differentiated tissues. Expressed in embryonic stem cells and in other dividing cells, such as some tumor cell lines.

The protein resides in the nucleus. The protein localises to the cytoplasm. Functionally, DNA-dependent RNA polymerase catalyzes the transcription of DNA into RNA using the four ribonucleoside triphosphates as substrates. Specific peripheric component of RNA polymerase III (Pol III) which synthesizes small non-coding RNAs including 5S rRNA, snRNAs, tRNAs and miRNAs from at least 500 distinct genomic loci. Acts as a long tether that bridges POLR3C/RPC3-POLR3F/RPC6-POLR3G/RPC7 heterotrimer and the mobile stalk of Pol III, coordinating the dynamics of Pol III stalk and clamp modules during the transition from apo to elongation state. Pol III exists as two alternative complexes defined by the mutually exclusive incorporation of subunit POLR3G/RPC7alpha or POLR3GL/RPC7beta. POLR3G/RPC7alpha modulates Pol III transcriptome by specifically enhancing the transcription of snaR-A non-coding RNAs. At resting state, occupies the active site of apo Pol III and keeps Pol III in an autoinhibitory mode, preventing non-specific transcription. Pol III plays a key role in sensing and limiting infection by intracellular bacteria and DNA viruses. Acts as a nuclear and cytosolic DNA sensor involved in innate immune response. Can sense non-self dsDNA that serves as template for transcription into dsRNA. The non-self RNA polymerase III transcripts, such as Epstein-Barr virus-encoded RNAs (EBERs), induce type I interferon and NF-kappa-B through the RIG-I pathway. In Homo sapiens (Human), this protein is DNA-directed RNA polymerase III subunit RPC7.